The sequence spans 38 residues: Toxin Bcg III 31.16 (38 aa).

3 cysteine pairs are disulfide-bonded: C4-C37, C6-C30, and C20-C38.

This sequence belongs to the sea anemone type 3 (BDS) potassium channel toxin family.

The protein localises to the secreted. Its subcellular location is the nematocyst. Functionally, possible modulator of crustacean voltage-gated sodium channels (Nav). The sequence is that of Toxin Bcg III 31.16 from Bunodosoma cangicum (Sea anemone).